We begin with the raw amino-acid sequence, 304 residues long: Protein transport protein sec13 (304 aa).

WD repeat units follow at residues 12 to 51, 56 to 97, 102 to 143, 147 to 203, 211 to 253, and 259 to 298; these read GHDDMIHDAVLDYYGRRLATCSSDRTIKIFEIEGESQRLV, GHDG…WQRI, LHKA…WEHN, AHGL…NGYK, GHTD…PGEW, and NFDAAVWRVSWSLSGNVLAASSDNNKVTLWKENLKGEWEN.

Belongs to the WD repeat SEC13 family. As to quaternary structure, the COPII coat is composed of at least 5 proteins: the sec23/24 complex, the sec13/31 complex, and the protein vtr-7/sar1. Component of the nuclear pore complex (NPC). NPC constitutes the exclusive means of nucleocytoplasmic transport. NPCs allow the passive diffusion of ions and small molecules and the active, nuclear transport receptor-mediated bidirectional transport of macromolecules such as proteins, RNAs, ribonucleoparticles (RNPs), and ribosomal subunits across the nuclear envelope. Due to its 8-fold rotational symmetry, all subunits are present with 8 copies or multiples thereof.

The protein localises to the cytoplasmic vesicle. It is found in the COPII-coated vesicle membrane. The protein resides in the endoplasmic reticulum membrane. It localises to the nucleus. Its subcellular location is the nuclear pore complex. Functionally, component of the coat protein complex II (COPII) which promotes the formation of transport vesicles from the endoplasmic reticulum (ER). The coat has two main functions, the physical deformation of the endoplasmic reticulum membrane into vesicles and the selection of cargo molecules. It also functions as a component of the nuclear pore complex (NPC). NPC components, collectively referred to as nucleoporins (NUPs), can play the role of both NPC structural components and of docking or interaction partners for transiently associated nuclear transport factors. Nup-20/sec13 is required for efficient mRNA export from the nucleus to the cytoplasm and for correct nuclear pore biogenesis and distribution. This chain is Protein transport protein sec13 (nup-20), found in Neurospora crassa (strain ATCC 24698 / 74-OR23-1A / CBS 708.71 / DSM 1257 / FGSC 987).